A 475-amino-acid polypeptide reads, in one-letter code: DnaB-like replicative helicase (475 aa).

Positions 165 to 444 (YMNKARKVPF…STPTEVNEVA (280 aa)) constitute an SF4 helicase domain. 197-204 (AGVNVGKS) contacts ATP. Residues 456–475 (YQRNESTRAQLDALANELKF) are interaction with the helicase assembly factor.

The protein belongs to the helicase family. DnaB subfamily. Homohexamer. The homohexamer is a trimer of asymmetric dimers. Interacts with the DNA primase; this interaction forms the active primosome complex, which is composed of 6 helicase and 1 primase subunits and expresses full helicase and primase activities. Interacts (via C-terminus) with the helicase assembly factor; this interaction brings about the rapid assembly of the helicase onto ssDNA. Part of the replicase complex that includes the DNA polymerase, the polymerase clamp, the clamp loader complex, the single-stranded DNA binding protein, the primase, the DnaB-like replicative helicase and the helicase assembly factor.

Its function is as follows. ATP-dependent DNA helicase essential for viral DNA replication and recombination. The helicase moves 5' -&gt; 3' on the lagging strand template, unwinding the DNA duplex ahead of the leading strand polymerase at the replication fork and generating ssDNA for both leading and lagging strand synthesis. Interaction with the primase allows the primase to initiate lagging strand synthesis and fully activates the helicase. Loaded by the helicase assembly factor on replication forks that begin at discrete replication origin sequences, as well as on forks that are created during recombination. This Escherichia coli (Bacteriophage T4) protein is DnaB-like replicative helicase.